Here is a 169-residue protein sequence, read N- to C-terminus: Benzoate 1,2-dioxygenase subunit beta (169 aa).

It belongs to the bacterial ring-hydroxylating dioxygenase beta subunit family. As to quaternary structure, this dioxygenase system consists of three proteins: the two subunits of the hydroxylase (BenA and BenB), and an electron transfer component (BenC).

It carries out the reaction benzoate + NADH + O2 + H(+) = (1R,6S)-1,6-dihydroxycyclohexa-2,4-diene-1-carboxylate + NAD(+). The protein operates within aromatic compound metabolism; benzoate degradation via hydroxylation; catechol from benzoate: step 1/2. Degradation of benzoate to 2-hydro-1,2-dihydroxybenzoate (DHB). The beta subunit may be responsible for the substrate specificity of the enzyme. This is Benzoate 1,2-dioxygenase subunit beta (benB) from Acinetobacter baylyi (strain ATCC 33305 / BD413 / ADP1).